The following is a 172-amino-acid chain: MQLHMNLPTSRIAAGASINVRPAPLLRTAAPKRVCKHIVRAENNPSTPPPSSPSPPPPPPTPAAPTVTEVMGFSGAPEIINGRLAMLGFVAALGAELSTGESVLTQLGDQPTLIALTFVLFSAASLIPAFARRKGDAMGPFTPDAEMTNGRFAMIGFAAMLVYEGIQGIALF.

The interval Ala-41–Thr-66 is disordered. Over residues Ser-46–Ala-63 the composition is skewed to pro residues. A run of 2 helical transmembrane segments spans residues Pro-111–Ala-131 and Phe-152–Phe-172.

The protein belongs to the ELIP/psbS family.

Its subcellular location is the plastid. The protein resides in the chloroplast membrane. Functionally, putative zeaxanthin binding protein. That forms photoprotective complexes within the light-harvesting antennae. The sequence is that of Carotene biosynthesis-related protein CBR, chloroplastic (CBR) from Dunaliella salina (Green alga).